A 609-amino-acid polypeptide reads, in one-letter code: UvrABC system protein C (609 aa).

Residues 13–91 enclose the GIY-YIG domain; it reads HQPGVYRMFD…IKAFQPRYNV (79 aa). The 36-residue stretch at 201–236 folds into the UVR domain; sequence QQVLEHLIKKMEQASMQLNFEQAAYFRDQIQAIRAV.

The protein belongs to the UvrC family. In terms of assembly, interacts with UvrB in an incision complex.

The protein resides in the cytoplasm. Functionally, the UvrABC repair system catalyzes the recognition and processing of DNA lesions. UvrC both incises the 5' and 3' sides of the lesion. The N-terminal half is responsible for the 3' incision and the C-terminal half is responsible for the 5' incision. This chain is UvrABC system protein C, found in Histophilus somni (strain 2336) (Haemophilus somnus).